The primary structure comprises 77 residues: Acyl carrier protein (77 aa).

The Carrier domain occupies 2–77; the sequence is SAIDKRVKEI…DAIDYITEHT (76 aa). The residue at position 37 (Ser37) is an O-(pantetheine 4'-phosphoryl)serine.

It belongs to the acyl carrier protein (ACP) family. Post-translationally, 4'-phosphopantetheine is transferred from CoA to a specific serine of apo-ACP by AcpS. This modification is essential for activity because fatty acids are bound in thioester linkage to the sulfhydryl of the prosthetic group.

The protein localises to the cytoplasm. It functions in the pathway lipid metabolism; fatty acid biosynthesis. Carrier of the growing fatty acid chain in fatty acid biosynthesis. The protein is Acyl carrier protein of Geobacter metallireducens (strain ATCC 53774 / DSM 7210 / GS-15).